The primary structure comprises 338 residues: S-adenosylmethionine:tRNA ribosyltransferase-isomerase (338 aa).

It belongs to the QueA family. As to quaternary structure, monomer.

The protein resides in the cytoplasm. The catalysed reaction is 7-aminomethyl-7-carbaguanosine(34) in tRNA + S-adenosyl-L-methionine = epoxyqueuosine(34) in tRNA + adenine + L-methionine + 2 H(+). It functions in the pathway tRNA modification; tRNA-queuosine biosynthesis. In terms of biological role, transfers and isomerizes the ribose moiety from AdoMet to the 7-aminomethyl group of 7-deazaguanine (preQ1-tRNA) to give epoxyqueuosine (oQ-tRNA). The sequence is that of S-adenosylmethionine:tRNA ribosyltransferase-isomerase from Carboxydothermus hydrogenoformans (strain ATCC BAA-161 / DSM 6008 / Z-2901).